A 66-amino-acid chain; its full sequence is Large ribosomal subunit protein bL33c (66 aa).

The protein belongs to the bacterial ribosomal protein bL33 family.

The protein resides in the plastid. It is found in the chloroplast. This chain is Large ribosomal subunit protein bL33c, found in Lobularia maritima (Sweet alyssum).